The primary structure comprises 291 residues: Serine hydrolase BPHL (291 aa).

An N-terminal signal peptide occupies residues 1–37; that stretch reads MATATVRPAAQRLRLLLSPLKSRICVPQAEPVATFGT. Residues 62 to 173 enclose the AB hydrolase-1 domain; that stretch reads AILLLPGMLG…ANAYVTEEDS (112 aa). Residue Lys74 is modified to N6-acetyllysine; alternate. Lys74 carries the N6-succinyllysine; alternate modification. Residues Lys86 and Lys119 each carry the N6-acetyllysine modification. The residue at position 126 (Lys126) is an N6-acetyllysine; alternate. An N6-succinyllysine; alternate modification is found at Lys126. The active-site Nucleophile is Ser139. N6-succinyllysine is present on Lys184. At Lys191 the chain carries N6-acetyllysine; alternate. N6-succinyllysine; alternate is present on Lys191. Lys217 carries the post-translational modification N6-acetyllysine. Position 221 (Glu221) interacts with Mg(2+). The residue at position 243 (Lys243) is an N6-acetyllysine. The active-site Charge relay system is the Asp244. An N6-acetyllysine; alternate mark is found at Lys260 and Lys271. 2 positions are modified to N6-succinyllysine; alternate: Lys260 and Lys271. Residue His272 is the Charge relay system of the active site.

Belongs to the AB hydrolase superfamily. Lipase family. Monomer. May also form homodimers.

It is found in the mitochondrion. The catalysed reaction is L-homocysteine thiolactone + H2O = L-homocysteine + H(+). It catalyses the reaction valacyclovir + H2O = acyclovir + L-valine + H(+). In terms of biological role, specific alpha-amino acid ester serine hydrolase that prefers small, hydrophobic, and aromatic side chains and does not have a stringent requirement for the leaving group other than preferring a primary alcohol. Has homocysteine-thiolactonase activity (in vitro) and may play a significant role in the detoxification of homocysteine thiolactone in vivo. Catalyzes the hydrolytic activation of amino acid ester prodrugs of nucleoside analogs such as valacyclovir and valganciclovir, converting them into their active forms (acyclovir and ganciclovir). The sequence is that of Serine hydrolase BPHL (Bphl) from Mus musculus (Mouse).